We begin with the raw amino-acid sequence, 535 residues long: MSDHDRDFDVVVVGGGHNGLVAAAYLARAGLRVRLLERLAQTGGAAVSIQAFDGVEVALSRYSYLVSLLPSRIVADLGAPVRLARRPFSSYTPAPATAGRSGLLIGPTGEPRAAHLAAIGAAPDAHGFAAFYRRCRLVTARLWPTLIEPLRTREQARRDIVEYGGHEAAAAWQAMVDEPIGHAIAGAVANDLLRGVIATDALIGTFARMHEPSLMQNICFLYHLVGGGTGVWHVPIGGMGSVTSALATAAARHGAEIVTGADVFALDPDGTVRYHSDGSDGAEHLVRGRFVLVGVTPAVLASLLGEPVAALAPGAQVKVNMVVRRLPRLRDDSVTPQQAFAGTFHVNETWSQLDAAYSQAASGRLPDPLPCEAYCHSLTDPSILSARLRDAGAQTLTVFGLHTPHSVFGDTEGLAERLTAAVLASLNSVLAEPIQDVLWTDAQSKPCIETTTTLDLQRTLGMTGGNIFHGALSWPFADNDDPLDTPARQWGVATDHERIMLCGSGARRGGAVSGIGGHNAAMAVLACLASRRKSP.

Helical transmembrane passes span 7 to 27 (DFDV…AYLA) and 509 to 529 (GGAV…ACLA).

The protein localises to the cell membrane. This is an uncharacterized protein from Mycobacterium bovis (strain ATCC BAA-935 / AF2122/97).